The following is a 233-amino-acid chain: Ribonuclease 3 (233 aa).

Positions 4 to 126 (LNKLMERLGH…IVGAIYIDAG (123 aa)) constitute an RNase III domain. Glu39 lines the Mg(2+) pocket. The active site involves Asp43. Mg(2+) is bound by residues Asp112 and Glu115. The active site involves Glu115. Positions 153–222 (DAKSLLQEWL…AKRFLELLDD (70 aa)) constitute a DRBM domain.

The protein belongs to the ribonuclease III family. In terms of assembly, homodimer. The cofactor is Mg(2+).

Its subcellular location is the cytoplasm. The catalysed reaction is Endonucleolytic cleavage to 5'-phosphomonoester.. Its function is as follows. Digests double-stranded RNA. Involved in the processing of primary rRNA transcript to yield the immediate precursors to the large and small rRNAs (23S and 16S). Processes some mRNAs, and tRNAs when they are encoded in the rRNA operon. Processes pre-crRNA and tracrRNA of type II CRISPR loci if present in the organism. In Coxiella burnetii (strain RSA 331 / Henzerling II), this protein is Ribonuclease 3.